Reading from the N-terminus, the 93-residue chain is Large ribosomal subunit protein bL27 (93 aa).

The propeptide occupies 1 to 9 (MLRLDLQFF).

It belongs to the bacterial ribosomal protein bL27 family. The N-terminus is cleaved by ribosomal processing cysteine protease Prp.

This chain is Large ribosomal subunit protein bL27, found in Bacillus licheniformis (strain ATCC 14580 / DSM 13 / JCM 2505 / CCUG 7422 / NBRC 12200 / NCIMB 9375 / NCTC 10341 / NRRL NRS-1264 / Gibson 46).